Reading from the N-terminus, the 314-residue chain is uncharacterized protein (314 aa).

It belongs to the carbohydrate kinase PfkB family.

This is an uncharacterized protein from Buchnera aphidicola subsp. Schizaphis graminum (strain Sg).